Reading from the N-terminus, the 440-residue chain is Xylose isomerase (440 aa).

Active-site residues include His100 and Asp103. Glu231, Glu267, His270, Asp295, Asp306, Asp308, and Asp338 together coordinate Mg(2+).

The protein belongs to the xylose isomerase family. In terms of assembly, homotetramer. Requires Mg(2+) as cofactor.

The protein resides in the cytoplasm. It carries out the reaction alpha-D-xylose = alpha-D-xylulofuranose. The polypeptide is Xylose isomerase (Burkholderia ambifaria (strain MC40-6)).